Here is a 181-residue protein sequence, read N- to C-terminus: PLAT domain-containing protein 1 (181 aa).

The N-terminal stretch at 1 to 14 (MARRDVLLPFLLLL) is a signal peptide. Residue Ala-15 is modified to N-acetylalanine. The PLAT domain occupies 29–156 (CVYTFYLRTG…SPYELTAVRN (128 aa)).

As to expression, expressed in root tips, pericycle cells, lateral root primordia, stomata, leaf vasculature, hydathodes and floral organs.

The protein resides in the endoplasmic reticulum. The protein localises to the plastid. It is found in the chloroplast. It localises to the plastoglobule. Positive regulator of abiotic stress tolerance involved in the regulation of plant growth. May be a downstream target of the abscisic acid (ABA) signaling pathway. This is PLAT domain-containing protein 1 from Arabidopsis thaliana (Mouse-ear cress).